We begin with the raw amino-acid sequence, 184 residues long: Lactoylglutathione lyase (184 aa).

Residue alanine 2 is modified to N-acetylalanine. A disulfide bond links cysteine 19 and cysteine 20. Residues 31–177 form the VOC domain; the sequence is LLQQTMLRVK…DGYWIEILNP (147 aa). The substrate site is built by glutamine 34 and arginine 38. Glutamine 34 lines the Zn(2+) pocket. A disulfide bridge connects residues cysteine 61 and cysteine 139. Residue lysine 88 is modified to N6-succinyllysine. Glutamate 100 serves as a coordination point for Zn(2+). Asparagine 104 contacts substrate. At threonine 107 the chain carries Phosphothreonine. Residues arginine 123 and histidine 127 each coordinate substrate. Zn(2+) is bound at residue histidine 127. At cysteine 139 the chain carries S-glutathionyl cysteine; alternate. Lysine 148 carries the N6-acetyllysine; alternate modification. At lysine 148 the chain carries N6-succinyllysine; alternate. 157–158 is a binding site for substrate; that stretch reads KM. A Zn(2+)-binding site is contributed by glutamate 173. Glutamate 173 serves as the catalytic Proton donor/acceptor.

Belongs to the glyoxalase I family. Homodimer. Zn(2+) is required as a cofactor. Post-translationally, glutathionylation at Cys-139 inhibits enzyme activity. Phosphorylated at Thr-107 in the presence of CaMK2. However, this is a consensus site for phosphorylation by CK2 so phosphorylation may be mediated by CK2 rather than CaMK2. Phosphorylation is induced by TNF and suppresses the TNF-induced transcriptional activity of NF-kappa-B. In terms of processing, exists in a nitric oxide (NO)-modified form. The exact nature of the modification is unknown, but it suppresses the TNF-induced transcriptional activity of NF-kappa-B.

It carries out the reaction (R)-S-lactoylglutathione = methylglyoxal + glutathione. Its pathway is secondary metabolite metabolism; methylglyoxal degradation; (R)-lactate from methylglyoxal: step 1/2. Its activity is regulated as follows. Regulated by oxidation of Cys-139 in response to the redox state of the cell. Results in the alternative formation of cystine or glutathione-bound cysteine, the latter modification leading to reduced enzyme activity. Functionally, catalyzes the conversion of hemimercaptal, formed from methylglyoxal and glutathione, to S-lactoylglutathione. Involved in the regulation of TNF-induced transcriptional activity of NF-kappa-B. Required for normal osteoclastogenesis. The protein is Lactoylglutathione lyase (GLO1) of Homo sapiens (Human).